Here is a 488-residue protein sequence, read N- to C-terminus: Dipeptide and tripeptide permease B (488 aa).

The Cytoplasmic segment spans residues 1 to 27 (MSKTASVGLWDQPKPFFMIFFVELWER). A helical transmembrane segment spans residues 28–48 (FGFYGVQGILAIYFVQQLGFS). Over 49 to 52 (EEQS) the chain is Periplasmic. A helical transmembrane segment spans residues 53 to 73 (FITFGAFTALVYGLISVGGYV). Over 74–82 (GDHILGTKR) the chain is Cytoplasmic. The chain crosses the membrane as a helical span at residues 83–103 (TIVLGAIVMAIGYYMIGLSIM). The Periplasmic portion of the chain corresponds to 104-106 (KPE). The helical transmembrane segment at 107–127 (LIFYALGTVAVGNGLFKANPA) threads the bilayer. Topologically, residues 128 to 146 (SLLAKCYQPQDPRLDGAFT) are cytoplasmic. The chain crosses the membrane as a helical span at residues 147–167 (LFYMSINLGSLFSLSLAPVIA). Topologically, residues 168–172 (EKYGY) are periplasmic. A helical membrane pass occupies residues 173 to 193 (TVTYNICGIGLIIALLVYIAC). The Cytoplasmic segment spans residues 194–211 (RRMVHNIGSAPDHHPVKP). The helical transmembrane segment at 212–232 (IGLIAVLIGSVVMVGVCAWLL) threads the bilayer. Over 233 to 234 (HN) the chain is Periplasmic. Residues 235-255 (IKVANIALFAITTIVVLIFFW) form a helical membrane-spanning segment. The Cytoplasmic portion of the chain corresponds to 256-267 (QAFKQNRVGRNK). The helical transmembrane segment at 268–288 (MFVAFILMLQAVVFFILYNQM) threads the bilayer. The Periplasmic portion of the chain corresponds to 289 to 311 (PMSLNFFAINNVHHQILGFDVNP). A helical transmembrane segment spans residues 312–332 (VSFQAFNPFWIIIVSPILAVV). The Cytoplasmic segment spans residues 333 to 348 (YTKLGAKGKDFSMPAK). A helical transmembrane segment spans residues 349–369 (FTFGMFLCSLGFLTAAASGLF). Over 370-378 (ADAQGITSP) the chain is Periplasmic. A helical membrane pass occupies residues 379–399 (WFIVLVYLFQSVGELMISALG). The Cytoplasmic segment spans residues 400 to 423 (LAMVAAFVPSYLTGFILGMWFLSQ). The helical transmembrane segment at 424–444 (AVASMLASHVAALTATPVGVT) threads the bilayer. The Periplasmic portion of the chain corresponds to 445 to 455 (DPLQTLPIYMS). The chain crosses the membrane as a helical span at residues 456–476 (VFGKIGVATLIVAIIMTFMVP). Residues 477–488 (WLNRIMREEVKA) are Cytoplasmic-facing.

This sequence belongs to the major facilitator superfamily. Proton-dependent oligopeptide transporter (POT/PTR) (TC 2.A.17) family. DtpB subfamily.

It is found in the cell inner membrane. In terms of biological role, proton-dependent permease that transports di- and tripeptides. The chain is Dipeptide and tripeptide permease B from Xenorhabdus bovienii (strain SS-2004) (Xenorhabdus nematophila subsp. bovienii).